The chain runs to 246 residues: Acetoacetate decarboxylase (246 aa).

Lys-116 functions as the Schiff-base intermediate with acetoacetate in the catalytic mechanism.

Belongs to the ADC family.

The catalysed reaction is acetoacetate + H(+) = acetone + CO2. Catalyzes the conversion of acetoacetate to acetone and carbon dioxide. The sequence is that of Acetoacetate decarboxylase from Bordetella avium (strain 197N).